We begin with the raw amino-acid sequence, 84 residues long: U4-theraphotoxin-Hhn1a (84 aa).

Positions 1-22 (MKVTLIAILTCAAVLVLHTTAA) are cleaved as a signal peptide. A propeptide spanning residues 23 to 47 (EELEESQLMEVGMPDTELEAVDEER) is cleaved from the precursor. 3 cysteine pairs are disulfide-bonded: Cys51–Cys65, Cys55–Cys76, and Cys70–Cys81.

This sequence belongs to the neurotoxin 12 (Hwtx-2) family. 02 (Hwtx-2) subfamily. As to expression, expressed by the venom gland.

Its subcellular location is the secreted. Its function is as follows. Postsynaptic neurotoxin. This Cyriopagopus hainanus (Chinese bird spider) protein is U4-theraphotoxin-Hhn1a.